Here is a 193-residue protein sequence, read N- to C-terminus: Putative kinase protein 029R (193 aa).

9 to 17 (GIIGSGKSS) serves as a coordination point for ATP. The substrate site is built by Glu-31, Tyr-43, and Gln-54. Catalysis depends on Glu-78, which acts as the Proton acceptor. Residues Arg-79 and Glu-142 each coordinate substrate.

Belongs to the DCK/DGK family.

The protein is Putative kinase protein 029R of Aedes vexans (Inland floodwater mosquito).